We begin with the raw amino-acid sequence, 257 residues long: Phosphonates import ATP-binding protein PhnC (257 aa).

The ABC transporter domain maps to I4–I248.

This sequence belongs to the ABC transporter superfamily. Phosphonates importer (TC 3.A.1.9.1) family. As to quaternary structure, the complex is composed of two ATP-binding proteins (PhnC), two transmembrane proteins (PhnE) and a solute-binding protein (PhnD).

The protein localises to the cell membrane. The enzyme catalyses phosphonate(out) + ATP + H2O = phosphonate(in) + ADP + phosphate + H(+). Part of the ABC transporter complex PhnCDE involved in phosphonates import. Responsible for energy coupling to the transport system. This Staphylococcus epidermidis (strain ATCC 35984 / DSM 28319 / BCRC 17069 / CCUG 31568 / BM 3577 / RP62A) protein is Phosphonates import ATP-binding protein PhnC.